The following is a 594-amino-acid chain: 3-hydroxy-3-methylglutaryl coenzyme A reductase 2-A (594 aa).

Positions 1–32 (MDVRRRPVKSLSSAKTATAGEPPKSQQQHPKA) are disordered. Topologically, residues 1-37 (MDVRRRPVKSLSSAKTATAGEPPKSQQQHPKASDALP) are lumenal. Residues 38–58 (LPLYLTNGLFFTMFFSVMYFL) traverse the membrane as a helical segment. Over 59–81 (LHRWREKIRNSTPLHVVTLSELA) the chain is Cytoplasmic. Residues 82–102 (ALVLLMASVIYLLGFFGIGFV) traverse the membrane as a helical segment. Residues 103 to 549 (RSVIRPSPDA…SKESPGSNSR (447 aa)) are Lumenal-facing. A glycan (N-linked (GlcNAc...) asparagine) is linked at N261. E273 serves as the catalytic Charge relay system. N-linked (GlcNAc...) asparagine glycosylation is present at N337. Catalysis depends on charge relay system residues K405 and D481. A helical membrane pass occupies residues 550-570 (LLASIVAGSVLAGELSLMSAL). Residues 571–594 (AAGQLVKSHMKYNRSSKDITKLSS) are Cytoplasmic-facing. The active-site Proton donor is H579.

The protein belongs to the HMG-CoA reductase family. In terms of tissue distribution, mostly expressed in the petioles of seedlings, seedlings and roots, and, to a lower extent, in seeds, leaves, stems and flowers.

Its subcellular location is the endoplasmic reticulum membrane. The protein localises to the plastid. It localises to the chloroplast membrane. It is found in the peroxisome membrane. It carries out the reaction (R)-mevalonate + 2 NADP(+) + CoA = (3S)-3-hydroxy-3-methylglutaryl-CoA + 2 NADPH + 2 H(+). Its pathway is metabolic intermediate biosynthesis; (R)-mevalonate biosynthesis; (R)-mevalonate from acetyl-CoA: step 3/3. Its activity is regulated as follows. Competitive inhibition by mevinolin (Mev) is leading to a significant reduction of total ginsenoside in adventitious roots. Triggered by darkness. In terms of biological role, catalyzes the synthesis of mevalonate, the specific precursor of all isoprenoid compounds present in plants. Component of the triterpene saponins (e.g. ginsenosides or panaxosides) and phytosterols biosynthetic pathways. This is 3-hydroxy-3-methylglutaryl coenzyme A reductase 2-A from Panax ginseng (Korean ginseng).